The chain runs to 552 residues: Hydroxylamine reductase (552 aa).

[2Fe-2S] cluster-binding residues include cysteine 3, cysteine 6, cysteine 18, and cysteine 25. Hybrid [4Fe-2O-2S] cluster contacts are provided by histidine 250, glutamate 274, cysteine 318, cysteine 406, cysteine 434, cysteine 459, glutamate 493, and lysine 495. Cysteine 406 is modified (cysteine persulfide).

This sequence belongs to the HCP family. [2Fe-2S] cluster serves as cofactor. It depends on hybrid [4Fe-2O-2S] cluster as a cofactor.

It is found in the cytoplasm. The enzyme catalyses A + NH4(+) + H2O = hydroxylamine + AH2 + H(+). Catalyzes the reduction of hydroxylamine to form NH(3) and H(2)O. The protein is Hydroxylamine reductase of Shewanella sediminis (strain HAW-EB3).